Reading from the N-terminus, the 466-residue chain is tRNA-2-methylthio-N(6)-dimethylallyladenosine synthase (466 aa).

The MTTase N-terminal domain maps to 2 to 118 (KRFYIHTIGC…LPGHIQAVAH (117 aa)). [4Fe-4S] cluster is bound by residues Cys11, Cys47, Cys81, Cys157, Cys161, and Cys164. One can recognise a Radical SAM core domain in the interval 143-372 (DSSGVTGFIT…LELQNRITAE (230 aa)). Positions 375–453 (RALEGRVEQV…AHSLSGIAVG (79 aa)) constitute a TRAM domain.

This sequence belongs to the methylthiotransferase family. MiaB subfamily. Monomer. It depends on [4Fe-4S] cluster as a cofactor.

It is found in the cytoplasm. The enzyme catalyses N(6)-dimethylallyladenosine(37) in tRNA + (sulfur carrier)-SH + AH2 + 2 S-adenosyl-L-methionine = 2-methylsulfanyl-N(6)-dimethylallyladenosine(37) in tRNA + (sulfur carrier)-H + 5'-deoxyadenosine + L-methionine + A + S-adenosyl-L-homocysteine + 2 H(+). Catalyzes the methylthiolation of N6-(dimethylallyl)adenosine (i(6)A), leading to the formation of 2-methylthio-N6-(dimethylallyl)adenosine (ms(2)i(6)A) at position 37 in tRNAs that read codons beginning with uridine. In Desulfosudis oleivorans (strain DSM 6200 / JCM 39069 / Hxd3) (Desulfococcus oleovorans), this protein is tRNA-2-methylthio-N(6)-dimethylallyladenosine synthase.